Reading from the N-terminus, the 356-residue chain is Glutamine synthetase nodule isozyme (356 aa).

The GS beta-grasp domain occupies 19 to 99; the sequence is IIAEYIWVGG…VICDVYTPAG (81 aa). Residues 106-356 form the GS catalytic domain; the sequence is KRHNAAKIFS…IAETTLLWKP (251 aa).

Belongs to the glutamine synthetase family. Homooctamer. As to expression, found at highest levels in root nodules.

The protein resides in the cytoplasm. It carries out the reaction L-glutamate + NH4(+) + ATP = L-glutamine + ADP + phosphate + H(+). The chain is Glutamine synthetase nodule isozyme (GS1) from Medicago sativa (Alfalfa).